We begin with the raw amino-acid sequence, 156 residues long: Anaerobic nitrite reductase HB2 (156 aa).

In terms of domain architecture, Globin spans 2–151 (GFTDKQEALV…LASAIKAEMH (150 aa)). The Homodimerization signature appears at 35-39 (EIAPV). The heme b site is built by S45, K59, H63, and H98. The short motif at 105–117 (DPHFEVVKEALLR) is the Homodimerization element.

This sequence belongs to the plant globin family. In terms of assembly, homodimer. Heme b is required as a cofactor.

Its subcellular location is the cytoplasm. It localises to the nucleus. The enzyme catalyses Fe(III)-heme b-[protein] + nitric oxide + H2O = Fe(II)-heme b-[protein] + nitrite + 2 H(+). In terms of biological role, phytoglobin that reduces nitrite to nitric oxide (NO) under anoxic conditions (e.g. during flooding or in waterlogged soil). May not function as an oxygen storage or transport protein. Has an unusually high affinity for O(2) through an hexacoordinate heme iron because of a very low dissociation constant. The protein is Anaerobic nitrite reductase HB2 of Solanum lycopersicum (Tomato).